The sequence spans 345 residues: Serine/threonine-protein kinase US3 homolog (345 aa).

The Protein kinase domain occupies 49–334; it reads FSVLETFTPG…KALLDFAAFY (286 aa). Residues 55-63 and Lys78 contribute to the ATP site; that span reads FTPGAEGFT. Asp162 acts as the Proton acceptor in catalysis.

It belongs to the protein kinase superfamily. Ser/Thr protein kinase family. Post-translationally, phosphorylated by UL13 homolog; this phosphorylation regulates subsequent phosphorylation of UL31 and UL34 homologs by US3. Autophosphorylated.

The protein localises to the host cytoplasm. It localises to the host nucleus. The catalysed reaction is L-seryl-[protein] + ATP = O-phospho-L-seryl-[protein] + ADP + H(+). It carries out the reaction L-threonyl-[protein] + ATP = O-phospho-L-threonyl-[protein] + ADP + H(+). In terms of biological role, multifunctional serine/threonine kinase that plays a role in several processes including egress of virus particles from the nucleus, modulation of the actin cytoskeleton and inhibition of apoptosis. Phosphorylates UL31 and UL34 homologs, two critical regulators of capsid budding from nucleus to endoplasmic reticulum, thereby facilitating virion egress. Modulates and redistributes host components of the nuclear envelope, including LMNA, emerin/EMD and the nuclear matrix protein MATR3. Phosphorylates envelope glycoprotein B (gB), probably to direct it to the cell surface. Promotes virus intracellular spread by restructuring host cell cytoskeleton. Blocks host apoptosis to extend cell survival and allow efficient viral replication. Promotes viral gene expression by phosphorylating host HDAC2 to reduce viral genome silencing. The chain is Serine/threonine-protein kinase US3 homolog (US2) from Chlorocebus aethiops (Green monkey).